A 98-amino-acid chain; its full sequence is Small proline-rich protein 2B (98 aa).

A run of 5 repeats spans residues 21-29 (PKCPEPCPP), 30-38 (PKCPEPCPP), 39-47 (PVCCEPCPP), 48-56 (PKCPEPCPP), and 57-65 (PVCCEPCPP). The tract at residues 21–65 (PKCPEPCPPPKCPEPCPPPVCCEPCPPPKCPEPCPPPVCCEPCPP) is 5 X 9 AA approximate tandem repeats.

This sequence belongs to the cornifin (SPRR) family. As to expression, expressed in uterus.

The protein localises to the cytoplasm. In terms of biological role, cross-linked envelope protein of keratinocytes. It is a keratinocyte protein that first appears in the cell cytosol, but ultimately becomes cross-linked to membrane proteins by transglutaminase. All that results in the formation of an insoluble envelope beneath the plasma membrane. The chain is Small proline-rich protein 2B (Sprr2b) from Mus musculus (Mouse).